A 37-amino-acid polypeptide reads, in one-letter code: Large ribosomal subunit protein bL36 (37 aa).

The protein belongs to the bacterial ribosomal protein bL36 family.

This chain is Large ribosomal subunit protein bL36 (rpmJ), found in Fusobacterium nucleatum subsp. nucleatum (strain ATCC 25586 / DSM 15643 / BCRC 10681 / CIP 101130 / JCM 8532 / KCTC 2640 / LMG 13131 / VPI 4355).